The chain runs to 49 residues: Large ribosomal subunit protein bL33B (49 aa).

It belongs to the bacterial ribosomal protein bL33 family.

The protein is Large ribosomal subunit protein bL33B (rpmGB) of Bacillus licheniformis.